The primary structure comprises 351 residues: Protein disulfide isomerase CRELD2 (351 aa).

A signal peptide spans 1-21 (MRPPAPAVLGLLLLLLPTGEA). A CXXC motif is present at residues 28–31 (CKRC). Intrachain disulfides connect cysteine 28/cysteine 31, cysteine 137/cysteine 151, cysteine 145/cysteine 163, and cysteine 165/cysteine 174. An EGF-like 1 domain is found at 133-175 (DCLACQGGSERPCSGNGHCVGDGTREGDGSCQCHLGYQGPLCS). Residues 190 to 237 (HSICSACDEACKTCVGPTNRDCGQCEVGWVRQDDACVDVDECAAEPPP) form an FU 1 repeat. A glycan (N-linked (GlcNAc...) asparagine) is linked at asparagine 248. The FU 2 repeat unit spans residues 250–297 (SFVCEECDPTCMGCTGKGPTQCRECIAGYSKESGQCEDIDECSLAEKP). Residues 260-263 (CMGC) carry the CXXC motif. Disulfide bonds link cysteine 260-cysteine 263, cysteine 291-cysteine 305, cysteine 298-cysteine 314, and cysteine 316-cysteine 327. The region spanning 287–328 (DIDECSLAEKPCLRDNENCYNTPGSFVCVCPDGFEEAEDTCV) is the EGF-like 2; calcium-binding domain. The interval 329 to 351 (QTRPAGAEATEASPTQPPSREDL) is disordered.

This sequence belongs to the CRELD family. As to quaternary structure, interacts with CHRNA4. Component of a complex containing at least CRELD2, MANF, MATN3 and PDIA4.

Its subcellular location is the endoplasmic reticulum. The catalysed reaction is Catalyzes the rearrangement of -S-S- bonds in proteins.. In terms of biological role, protein disulfide isomerase. Might play a role in the unfolded protein response. May regulate transport of alpha4-beta2 neuronal acetylcholine receptor. The sequence is that of Protein disulfide isomerase CRELD2 (CRELD2) from Bos taurus (Bovine).